Here is a 311-residue protein sequence, read N- to C-terminus: Ketoisovalerate oxidoreductase subunit VorB (311 aa).

In terms of assembly, heterotetramer of one alpha, one beta, one delta and one gamma chain.

The enzyme catalyses 3-methyl-2-oxobutanoate + 2 oxidized [2Fe-2S]-[ferredoxin] + CoA = 2-methylpropanoyl-CoA + 2 reduced [2Fe-2S]-[ferredoxin] + CO2 + H(+). The protein is Ketoisovalerate oxidoreductase subunit VorB (vorB) of Pyrococcus abyssi (strain GE5 / Orsay).